The sequence spans 139 residues: Ribosome-binding factor A (139 aa).

The tract at residues proline 120–glutamate 139 is disordered. The span at aspartate 128–glutamate 139 shows a compositional bias: acidic residues.

Belongs to the RbfA family. As to quaternary structure, monomer. Binds 30S ribosomal subunits, but not 50S ribosomal subunits or 70S ribosomes.

It is found in the cytoplasm. One of several proteins that assist in the late maturation steps of the functional core of the 30S ribosomal subunit. Associates with free 30S ribosomal subunits (but not with 30S subunits that are part of 70S ribosomes or polysomes). Required for efficient processing of 16S rRNA. May interact with the 5'-terminal helix region of 16S rRNA. In Nostoc punctiforme (strain ATCC 29133 / PCC 73102), this protein is Ribosome-binding factor A.